We begin with the raw amino-acid sequence, 994 residues long: Chloride channel protein 1 (994 aa).

At 1–118 (MERSQSQQHG…VLRRKLGEDW (118 aa)) the chain is on the cytoplasmic side. Positions 37 to 61 (SENGGLQHRPRKDLGPRHNAHPTQI) are disordered. A helical membrane pass occupies residues 119 to 150 (IFLVLLGLLMALVSWCMDYVSAKSLQAYKWTY). Residues 151-158 (AQMQPSLP) lie on the Extracellular side of the membrane. The chain crosses the membrane as a helical span at residues 159-179 (LQYLAWVTFPLILILFSALFC). The Cytoplasmic segment spans residues 180–183 (QLIS). Residues 184–189 (PQAVGS) constitute an intramembrane region (note=Loop between two helices). The short motif at 188 to 192 (GSGIP) is the Selectivity filter part_1 element. Ser-189 lines the chloride pocket. The segment at residues 190-195 (GIPEMK) is an intramembrane region (helical). The Cytoplasmic segment spans residues 196–208 (TILRGVVLKEYLT). The helical intramembrane region spans 209 to 224 (LKAFVAKVVALTAGLG). Residues 225-230 (SGIPVG) constitute an intramembrane region (note=Loop between two helices). The Selectivity filter part_2 motif lies at 230–234 (GKEGP). Positions 231–246 (KEGPFVHIASICAAVL) form an intramembrane region, helical. Residues 247–268 (SKFMSMFSGVYEQPYYYTDILT) lie on the Cytoplasmic side of the membrane. 2 intramembrane regions (helical) span residues 269 to 280 (VGCAVGVGCCFG) and 281 to 290 (TPLGGVLFSI). Residues 291–301 (EVTSTYFAVRN) lie on the Cytoplasmic side of the membrane. The chain crosses the membrane as a helical span at residues 302-321 (YWRGFFAATFSAFVFRVLAV). The Extracellular segment spans residues 322–347 (WNKDAVTITALFRTNFRMDFPFDLKE). The helical transmembrane segment at 348–376 (LPAFAVIGICCGFLGAVFVYLHRQVMLGV) threads the bilayer. Over 377-390 (RKHKALSQFLAKHR) the chain is Cytoplasmic. Residues 391 to 408 (LLYPGIVTFVIASLTFPP) form a helical membrane-spanning segment. The Extracellular segment spans residues 409–414 (GMGQFM). The note=Loop between two helices intramembrane region spans 415–418 (AGEL). Positions 419–426 (MPREAIST) form an intramembrane region, helical. Residues 427 to 457 (LFDNNTWVKHIGDPKSLGQSAVWIHPQVNVV) are Extracellular-facing. Residues 458-475 (IIILLFFVMKFWMSIVAT) constitute an intramembrane region (helical). Positions 476 to 482 (TMPIPCG) form an intramembrane region, note=Loop between two helices. A Selectivity filter part_3 motif is present at residues 482 to 486 (GGFMP). The segment at residues 483–498 (GFMPVFVLGAAFGRLV) is an intramembrane region (helical). Residue Phe-484 coordinates chloride. Over 499–521 (GEIMAMLFPEGILFDDIIYKILP) the chain is Extracellular. The segment at residues 522 to 538 (GGYAVIGAAALTGAVSH) is an intramembrane region (helical). The segment at residues 539-540 (TV) is an intramembrane region (note=Loop between two helices). Residues 541 to 554 (STAVICFELTGQIA) constitute an intramembrane region (helical). Residues 555–557 (HIL) lie on the Extracellular side of the membrane. The segment at residues 558 to 571 (PMMVAVILANMVAQ) is an intramembrane region (helical). Positions 572-575 (SLQP) form an intramembrane region, note=Loop between two helices. An intramembrane region (helical) is located at residues 576–578 (SLY). Residue Tyr-578 coordinates chloride. The Cytoplasmic portion of the chain corresponds to 579-994 (DSIIQVKKLP…DEEDEDELIL (416 aa)). A CBS 1 domain is found at 609–668 (MVRDVKFVSASCTYGELRNLLQTTTVKTLPLVDSKDSMILLGSVERSELQSLLQRHLCAE). Disordered stretches follow at residues 710-769 (EDED…SADQ), 880-923 (TKSG…DGAP), and 965-994 (NLGP…ELIL). The span at 725 to 741 (TPTPPPPPPPPLPPQFP) shows a compositional bias: pro residues. Residues 827–882 (IDQSPFQLVEQTTLHKTHTLFSLLGLHLAYVTSMGKLRGVLALEELQKAIKGHTKS) enclose the CBS 2 domain. Ser-892 is subject to Phosphoserine. A compositionally biased stretch (acidic residues) spans 985–994 (DEEDEDELIL).

Belongs to the chloride channel (TC 2.A.49) family. ClC-1/CLCN1 subfamily. In terms of assembly, homodimer. As to expression, predominantly expressed in skeletal muscles.

It localises to the cell membrane. Its subcellular location is the sarcolemma. The protein localises to the T-tubule. The catalysed reaction is chloride(in) = chloride(out). It carries out the reaction bromide(in) = bromide(out). It catalyses the reaction iodide(out) = iodide(in). The enzyme catalyses thiocyanate(in) = thiocyanate(out). The catalysed reaction is nitrate(in) = nitrate(out). Modulated by membrane voltage with depolarization favouring channel opening and hyperpolarization favouring channel closure. Inhibited by acidic pH and ATP binding due to a shift of voltage dependence of common gating to more positive voltages. Inhibited by 9-anthracene-carboxylic acid. Its function is as follows. Voltage-gated chloride channel involved in skeletal muscle excitability. Generates most of the plasma membrane chloride conductance in skeletal muscle fibers, stabilizes the resting membrane potential and contributes to the repolarization phase during action potential firing. Forms a homodimeric channel where each subunit has its own ion conduction pathway. Conducts double-barreled currents controlled by two types of gates, two fast glutamate gates that control each subunit independently and a slow common gate that opens and shuts off both subunits simultaneously. Has a significant open probability at muscle resting potential and is further activated upon membrane depolarization. Permeable to small monovalent anions with ion selectivity for chloride &gt; thiocyanate &gt; bromide &gt; nitrate &gt; iodide. This is Chloride channel protein 1 (Clcn1) from Rattus norvegicus (Rat).